Reading from the N-terminus, the 63-residue chain is MKASELTEKSVEELNAELLGLLREQFNLRMQHATGQLTQTHQLKIVRRNIARVKTIITSKAGA.

The protein belongs to the universal ribosomal protein uL29 family.

This is Large ribosomal subunit protein uL29 from Shewanella halifaxensis (strain HAW-EB4).